Here is a 255-residue protein sequence, read N- to C-terminus: RNA polymerase sigma-F factor (255 aa).

The Polymerase core binding motif lies at 61 to 74 (DLFQIGCIGLLKSV). Positions 221–240 (QSEVADRLGISQVQVSRLEK) form a DNA-binding region, H-T-H motif.

It belongs to the sigma-70 factor family.

Sigma factors are initiation factors that promote the attachment of RNA polymerase to specific initiation sites and are then released. This sigma factor is responsible for the expression of sporulation specific genes. The polypeptide is RNA polymerase sigma-F factor (sigF) (Bacillus licheniformis).